The following is a 184-amino-acid chain: MDTILLETEERMEKAVAALDREFGRLRTGRASTSLVDSIKVDYYGTPTPINQLASVAVPDSRTITIQPWDRGAFALVEKAIMQSDLGLTPINDGKIIRISMPPLTEERRKELVKVAKKYTEDAKVAVRNIRRDANEQIKKMEKDKAITEDDMKRGQDEVQKLTDAFVAKSEKVLAKKEKEIMEV.

This sequence belongs to the RRF family.

Its subcellular location is the cytoplasm. Functionally, responsible for the release of ribosomes from messenger RNA at the termination of protein biosynthesis. May increase the efficiency of translation by recycling ribosomes from one round of translation to another. The chain is Ribosome-recycling factor from Oleidesulfovibrio alaskensis (strain ATCC BAA-1058 / DSM 17464 / G20) (Desulfovibrio alaskensis).